Consider the following 109-residue polypeptide: RNA-binding protein Hfq (109 aa).

One can recognise a Sm domain in the interval D9–V68. A disordered region spans residues P77 to E109.

Belongs to the Hfq family. In terms of assembly, homohexamer.

RNA chaperone that binds small regulatory RNA (sRNAs) and mRNAs to facilitate mRNA translational regulation in response to envelope stress, environmental stress and changes in metabolite concentrations. Also binds with high specificity to tRNAs. The chain is RNA-binding protein Hfq from Francisella tularensis subsp. holarctica (strain FTNF002-00 / FTA).